The chain runs to 150 residues: Large ribosomal subunit protein uL23 (150 aa).

Positions 1–24 (MNKENKTQAVNKAKNTAKVAKKGS) are disordered. Low complexity predominate over residues 7–18 (TQAVNKAKNTAK).

It belongs to the universal ribosomal protein uL23 family.

The polypeptide is Large ribosomal subunit protein uL23 (RPL23A) (Tetrahymena thermophila (strain SB210)).